A 203-amino-acid chain; its full sequence is Proteasome subunit beta 2 (203 aa).

Residues 1-9 (MGEEVQIGA) constitute a propeptide, removed in mature form; by autocatalysis. T10 (nucleophile) is an active-site residue.

This sequence belongs to the peptidase T1B family. In terms of assembly, the 20S proteasome core is composed of 14 alpha and 14 beta subunits that assemble into four stacked heptameric rings, resulting in a barrel-shaped structure. The two inner rings, each composed of seven catalytic beta subunits, are sandwiched by two outer rings, each composed of seven alpha subunits. The catalytic chamber with the active sites is on the inside of the barrel. Has a gated structure, the ends of the cylinder being occluded by the N-termini of the alpha-subunits. Is capped at one or both ends by the proteasome regulatory ATPase, PAN.

It is found in the cytoplasm. The enzyme catalyses Cleavage of peptide bonds with very broad specificity.. With respect to regulation, the formation of the proteasomal ATPase PAN-20S proteasome complex, via the docking of the C-termini of PAN into the intersubunit pockets in the alpha-rings, triggers opening of the gate for substrate entry. Interconversion between the open-gate and close-gate conformations leads to a dynamic regulation of the 20S proteasome proteolysis activity. Functionally, component of the proteasome core, a large protease complex with broad specificity involved in protein degradation. The sequence is that of Proteasome subunit beta 2 from Pyrobaculum arsenaticum (strain DSM 13514 / JCM 11321 / PZ6).